Consider the following 252-residue polypeptide: Beta-crystallin B1 (252 aa).

Composition is skewed to low complexity over residues 1-15 and 24-37; these read MSQA…TVAV and KGAP…SPGT. A disordered region spans residues 1 to 42; that stretch reads MSQAAKASASATVAVNPGPDTKGKGAPPAGTSPSPGTTLAPT. N-acetylserine is present on S2. The tract at residues 2-58 is N-terminal arm; it reads SQAAKASASATVAVNPGPDTKGKGAPPAGTSPSPGTTLAPTTVPITSAKAAELPPGN. Beta/gamma crystallin 'Greek key' domains lie at 59 to 98 and 99 to 143; these read YRLV…IVSA and GPWV…RPIK. The interval 144–148 is connecting peptide; the sequence is MDAQE. 2 consecutive Beta/gamma crystallin 'Greek key' domains span residues 149 to 190 and 191 to 233; these read HKIS…KVSS and GTWV…RRLR. Residues 235–252 form a C-terminal arm region; that stretch reads KQWHLEGSFPVLATEPPK.

Belongs to the beta/gamma-crystallin family. Homo/heterodimer, or complexes of higher-order. The structure of beta-crystallin oligomers seems to be stabilized through interactions between the N-terminal arms. Specific cleavages in the N-terminal arm occur during lens maturation and give rise to truncated forms, leading to impaired oligomerization and protein insolubilization.

Crystallins are the dominant structural components of the vertebrate eye lens. The chain is Beta-crystallin B1 (CRYBB1) from Homo sapiens (Human).